We begin with the raw amino-acid sequence, 223 residues long: PKHD-type hydroxylase syc1482_d (223 aa).

Residues Arg-78–Ser-176 form the Fe2OG dioxygenase domain. Positions 96, 98, and 157 each coordinate Fe cation. Arg-167 is a binding site for 2-oxoglutarate.

It depends on Fe(2+) as a cofactor. L-ascorbate is required as a cofactor.

The polypeptide is PKHD-type hydroxylase syc1482_d (Synechococcus sp. (strain ATCC 27144 / PCC 6301 / SAUG 1402/1) (Anacystis nidulans)).